A 260-amino-acid polypeptide reads, in one-letter code: UPF0246 protein Cbei_1739 (260 aa).

This sequence belongs to the UPF0246 family.

In Clostridium beijerinckii (strain ATCC 51743 / NCIMB 8052) (Clostridium acetobutylicum), this protein is UPF0246 protein Cbei_1739.